We begin with the raw amino-acid sequence, 308 residues long: Probable dimethyladenosine transferase (308 aa).

Basic residues predominate over residues 1-11 (MGKTSKVKKTK). The tract at residues 1-24 (MGKTSKVKKTKAGSSTGNVQSLPF) is disordered. Residues 12 to 24 (AGSSTGNVQSLPF) are compositionally biased toward polar residues. The S-adenosyl-L-methionine site is built by His-31, Leu-33, Gly-58, Glu-79, Asp-107, and Asn-122.

It belongs to the class I-like SAM-binding methyltransferase superfamily. rRNA adenine N(6)-methyltransferase family. In terms of assembly, part of the small subunit (SSU) processome, composed of more than 70 proteins and the RNA chaperone small nucleolar RNA (snoRNA) U3.

It is found in the nucleus. The protein localises to the nucleolus. It catalyses the reaction adenosine(1779)/adenosine(1780) in 18S rRNA + 4 S-adenosyl-L-methionine = N(6)-dimethyladenosine(1779)/N(6)-dimethyladenosine(1780) in 18S rRNA + 4 S-adenosyl-L-homocysteine + 4 H(+). Its function is as follows. Specifically dimethylates two adjacent adenosines in the loop of a conserved hairpin near the 3'-end of 18S rRNA in the 40S particle. Involved in the pre-rRNA processing steps leading to small-subunit rRNA production independently of its RNA-modifying catalytic activity. Part of the small subunit (SSU) processome, first precursor of the small eukaryotic ribosomal subunit. During the assembly of the SSU processome in the nucleolus, many ribosome biogenesis factors, an RNA chaperone and ribosomal proteins associate with the nascent pre-rRNA and work in concert to generate RNA folding, modifications, rearrangements and cleavage as well as targeted degradation of pre-ribosomal RNA by the RNA exosome. The protein is Probable dimethyladenosine transferase of Caenorhabditis elegans.